Consider the following 264-residue polypeptide: Glutamate racemase (264 aa).

Residues 10 to 11 and 42 to 43 each bind substrate; these read DS and YG. Residue Cys73 is the Proton donor/acceptor of the active site. 74 to 75 lines the substrate pocket; that stretch reads NT. Cys183 acts as the Proton donor/acceptor in catalysis. 184 to 185 serves as a coordination point for substrate; it reads TH.

The protein belongs to the aspartate/glutamate racemases family.

It catalyses the reaction L-glutamate = D-glutamate. It functions in the pathway cell wall biogenesis; peptidoglycan biosynthesis. Functionally, provides the (R)-glutamate required for cell wall biosynthesis. The polypeptide is Glutamate racemase (Streptococcus uberis (strain ATCC BAA-854 / 0140J)).